Reading from the N-terminus, the 408-residue chain is Imidazolonepropionase (408 aa).

Fe(3+) is bound by residues histidine 73 and histidine 75. The Zn(2+) site is built by histidine 73 and histidine 75. Arginine 82, tyrosine 145, and histidine 178 together coordinate 4-imidazolone-5-propanoate. Tyrosine 145 lines the N-formimidoyl-L-glutamate pocket. Histidine 243 provides a ligand contact to Fe(3+). A Zn(2+)-binding site is contributed by histidine 243. 4-imidazolone-5-propanoate is bound at residue glutamine 246. Aspartate 318 is a binding site for Fe(3+). Aspartate 318 contributes to the Zn(2+) binding site. N-formimidoyl-L-glutamate is bound by residues asparagine 320 and glycine 322. Position 323 (serine 323) interacts with 4-imidazolone-5-propanoate.

The protein belongs to the metallo-dependent hydrolases superfamily. HutI family. The cofactor is Zn(2+). It depends on Fe(3+) as a cofactor.

It localises to the cytoplasm. The catalysed reaction is 4-imidazolone-5-propanoate + H2O = N-formimidoyl-L-glutamate. Its pathway is amino-acid degradation; L-histidine degradation into L-glutamate; N-formimidoyl-L-glutamate from L-histidine: step 3/3. Functionally, catalyzes the hydrolytic cleavage of the carbon-nitrogen bond in imidazolone-5-propanoate to yield N-formimidoyl-L-glutamate. It is the third step in the universal histidine degradation pathway. The protein is Imidazolonepropionase of Shewanella sp. (strain W3-18-1).